Reading from the N-terminus, the 295-residue chain is Acetyl-coenzyme A carboxylase carboxyl transferase subunit beta (295 aa).

Positions 1–20 are disordered; sequence MSWLSKLMPSGIRTENTPAK. A CoA carboxyltransferase N-terminal domain is found at 28-295; the sequence is LWEKCSNCGS…QPHPQDADAA (268 aa). Positions 32, 35, 51, and 54 each coordinate Zn(2+). The segment at 32-54 adopts a C4-type zinc-finger fold; sequence CSNCGSALYGPELEENLEVCPKC.

The protein belongs to the AccD/PCCB family. In terms of assembly, acetyl-CoA carboxylase is a heterohexamer composed of biotin carboxyl carrier protein (AccB), biotin carboxylase (AccC) and two subunits each of ACCase subunit alpha (AccA) and ACCase subunit beta (AccD). Requires Zn(2+) as cofactor.

It is found in the cytoplasm. It carries out the reaction N(6)-carboxybiotinyl-L-lysyl-[protein] + acetyl-CoA = N(6)-biotinyl-L-lysyl-[protein] + malonyl-CoA. It participates in lipid metabolism; malonyl-CoA biosynthesis; malonyl-CoA from acetyl-CoA: step 1/1. Its function is as follows. Component of the acetyl coenzyme A carboxylase (ACC) complex. Biotin carboxylase (BC) catalyzes the carboxylation of biotin on its carrier protein (BCCP) and then the CO(2) group is transferred by the transcarboxylase to acetyl-CoA to form malonyl-CoA. The protein is Acetyl-coenzyme A carboxylase carboxyl transferase subunit beta of Xanthomonas oryzae pv. oryzae (strain MAFF 311018).